A 328-amino-acid polypeptide reads, in one-letter code: Naphthalene 1,2-dioxygenase system ferredoxin--NAD(P)(+), reductase component (328 aa).

The 2Fe-2S ferredoxin-type domain occupies 1-89 (MELLIQPNNR…NCAIEVPEAD (89 aa)). 4 residues coordinate [2Fe-2S] cluster: C35, C40, C43, and C73. An FAD-binding FR-type domain is found at 96–193 (ARIIKGTVVA…SGPLGTAYLR (98 aa)).

Belongs to the bacterial ring-hydroxylating dioxygenase ferredoxin reductase component family. The naphthalene dioxygenase (NDO) multicomponent enzyme system is composed of an electron transfer component and a dioxygenase component (iron sulfur protein (ISP)). The electron transfer component is composed of a ferredoxin reductase (NdoR) and a ferredoxin (NdoA), and the dioxygenase component is formed of a heterohexamer (trimer of heterodimers) of three large alpha subunits (NdoB) and three small beta subunits (NdoC). [2Fe-2S] cluster serves as cofactor. The cofactor is FAD.

It carries out the reaction 2 reduced [2Fe-2S]-[ferredoxin] + NAD(+) + H(+) = 2 oxidized [2Fe-2S]-[ferredoxin] + NADH. It catalyses the reaction 2 reduced [2Fe-2S]-[ferredoxin] + NADP(+) + H(+) = 2 oxidized [2Fe-2S]-[ferredoxin] + NADPH. It functions in the pathway aromatic compound metabolism; naphthalene degradation. With respect to regulation, strongly inhibited by p-chloromercuribenzoate. Also inhibited by N-ethylmaleimide and o-phenanthroline. Functionally, component of the naphthalene dioxygenase (NDO) multicomponent enzyme system which catalyzes the incorporation of both atoms of molecular oxygen into naphthalene to form cis-(1R,2S)-dihydroxy-1,2-dihydronaphthalene. Ferredoxin reductase catalyzes the transfer of electrons from NADH to ferredoxin (NdoA). NADPH is also effective but yields only 39% of the activity obtained with NADH. Also able to catalyze the cis-dihydroxylation of biphenyl and phenanthrene. The chain is Naphthalene 1,2-dioxygenase system ferredoxin--NAD(P)(+), reductase component (ndoR) from Pseudomonas putida (Arthrobacter siderocapsulatus).